We begin with the raw amino-acid sequence, 678 residues long: DNA ligase (678 aa).

NAD(+) is bound by residues 36–40 (DSEFD), 85–86 (SL), and E117. Residue K119 is the N6-AMP-lysine intermediate of the active site. R140, E177, K294, and K318 together coordinate NAD(+). The Zn(2+) site is built by C412, C415, C430, and C436. The BRCT domain occupies 595-678 (IIDAPLLGKT…TWWQHYGNAV (84 aa)).

The protein belongs to the NAD-dependent DNA ligase family. LigA subfamily. Mg(2+) is required as a cofactor. It depends on Mn(2+) as a cofactor.

It carries out the reaction NAD(+) + (deoxyribonucleotide)n-3'-hydroxyl + 5'-phospho-(deoxyribonucleotide)m = (deoxyribonucleotide)n+m + AMP + beta-nicotinamide D-nucleotide.. Functionally, DNA ligase that catalyzes the formation of phosphodiester linkages between 5'-phosphoryl and 3'-hydroxyl groups in double-stranded DNA using NAD as a coenzyme and as the energy source for the reaction. It is essential for DNA replication and repair of damaged DNA. In Dichelobacter nodosus (strain VCS1703A), this protein is DNA ligase.